The primary structure comprises 602 residues: Elongation factor 4 (602 aa).

In terms of domain architecture, tr-type G spans 5 to 187 (DHIRNFSIIA…ALVKRIPAPK (183 aa)). GTP contacts are provided by residues 17-22 (DHGKST) and 134-137 (NKID).

The protein belongs to the TRAFAC class translation factor GTPase superfamily. Classic translation factor GTPase family. LepA subfamily.

Its subcellular location is the cell inner membrane. It carries out the reaction GTP + H2O = GDP + phosphate + H(+). Its function is as follows. Required for accurate and efficient protein synthesis under certain stress conditions. May act as a fidelity factor of the translation reaction, by catalyzing a one-codon backward translocation of tRNAs on improperly translocated ribosomes. Back-translocation proceeds from a post-translocation (POST) complex to a pre-translocation (PRE) complex, thus giving elongation factor G a second chance to translocate the tRNAs correctly. Binds to ribosomes in a GTP-dependent manner. The protein is Elongation factor 4 of Zymomonas mobilis subsp. mobilis (strain ATCC 31821 / ZM4 / CP4).